Reading from the N-terminus, the 165-residue chain is Mating factor alpha-1 (165 aa).

Residues 1 to 19 constitute a signal peptide (or 20); that stretch reads MRFPSIFTAVLFAASSALA. 4 consecutive propeptides follow at residues 20–89, 105–110, 126–131, and 147–152; these read APVN…EAEA, EAEAEA, and EADAEA.

In terms of biological role, the active factor is excreted into the culture medium by haploid cells of the alpha mating type and acts on cells of the opposite mating type (type A). It mediates the conjugation process between the two types by inhibiting the initiation of DNA synthesis in type a cells and synchronizing them with type alpha. The chain is Mating factor alpha-1 (MF(ALPHA)1) from Saccharomyces cerevisiae (strain ATCC 204508 / S288c) (Baker's yeast).